The chain runs to 110 residues: UPF0060 membrane protein RSp1275 (110 aa).

4 consecutive transmembrane segments (helical) span residues 8 to 28 (FLFA…WLVL), 33 to 53 (SAWL…LLTL), 63 to 83 (AAYG…VDGA), and 90 to 110 (IGGA…PQPT).

It belongs to the UPF0060 family.

The protein resides in the cell inner membrane. The protein is UPF0060 membrane protein RSp1275 of Ralstonia nicotianae (strain ATCC BAA-1114 / GMI1000) (Ralstonia solanacearum).